Reading from the N-terminus, the 395-residue chain is Forkhead box protein I3 (395 aa).

The fork-head DNA-binding region spans 131-225 (RPPYSYSALI…DNGNFRRKRK (95 aa)). 2 disordered regions span residues 216–288 (DNGN…GIIS) and 322–370 (RNFS…SSGS). A Nuclear localization signal motif is present at residues 221–227 (RRKRKRR). A compositionally biased stretch (low complexity) spans 234-245 (ATTAAASSLGGL). Positions 325–335 (SAGQLSGGTFT) are enriched in polar residues. Residues 336-349 (PSSSSSQEVPSPEQ) are compositionally biased toward low complexity.

Initially expressed in the pre-placodal ectoderm surrounding the neural plate, which will give rise to all craniofacial sensory organs. Expression then becomes restricted to a region immediately anterior to the first pair of somites that will give rise to the otic and epibranchial placodes, before becoming down-regulated from this region and restricted to the ectoderm and endoderm of the pharyngeal arches.

Its subcellular location is the nucleus. Functionally, transcription factor required for pharyngeal arch development, which is involved in otic placode development. This Gallus gallus (Chicken) protein is Forkhead box protein I3.